Here is a 143-residue protein sequence, read N- to C-terminus: MRIEAVVEVRFTEDRGKVLKALQNVFTPVSIEEKPSESGVLIVATCEGYTCLEKLRSAIWRQGIQDAARNVISKGIVSENTIIFSVNKQAAYVGVVSFVTETNESPLGPITFTVKTNNVRQFLDWLAPRTYRGRVYYEAPPPD.

It belongs to the UPF0201 family.

The sequence is that of UPF0201 protein Pisl_1658 from Pyrobaculum islandicum (strain DSM 4184 / JCM 9189 / GEO3).